The primary structure comprises 383 residues: Seipin (383 aa).

Over 1–27 the chain is Cytoplasmic; sequence MVNDPPVPALLWAQEVGHVLAGRARRL. A helical membrane pass occupies residues 28–48; that stretch reads MLQFGVLFCTILLLLWVSVFL. Residues 49 to 242 are Lumenal-facing; sequence YGSFYYSYMP…TCAFVGVASN (194 aa). N-linked (GlcNAc...) asparagine glycosylation is found at asparagine 88 and asparagine 242. The chain crosses the membrane as a helical span at residues 243–263; that stretch reads FTFLSVIVLFSYMQWVWGAVW. Residues 264 to 383 lie on the Cytoplasmic side of the membrane; sequence PRHRFSLQVN…LRQRPTCSSS (120 aa). Positions 279–383 are disordered; it reads NSHHGAPRRI…LRQRPTCSSS (105 aa). Position 289 is a phosphoserine (serine 289). Over residues 292 to 302 the composition is skewed to polar residues; that stretch reads QPGQESTQQSD. Residues 322 to 332 are compositionally biased toward basic and acidic residues; the sequence is EEEKPEKRPLN. 2 positions are modified to phosphoserine: serine 342 and serine 345. A compositionally biased stretch (low complexity) spans 353–371; it reads TEANPPTSASASALAPETL.

The protein belongs to the seipin family. In terms of assembly, undecamer (an oligomer having eleven subunits). Oligomerization is important for its function in lipid droplet formation. Interacts with LDAF1 to form an oligomeric complex. Interacts with RAB18. Interacts with ZFYVE1 in a RAB18-dependent manner. Expressed in the paraventricular nucleus of the hypothalamus (PVN) and brainstem dorsal vagal complex (DVC) in oxytocin and catecholaminergic neurons (at protein level). Highest expression detected in subcutaneous and epididymal white adipose tissue, brown adipose tissue and testis. Also expressed in brain, skeletal muscle and adrenal gland, with lower levels detected in liver, heart, kidney, spleen, lung and small intestine. In brain, detected in piriform cortex, olfactory tubercle, islands of Calleja, lateral septal nucleus, medial septal nucleus, nucleus of the vertical limb of the diagonal band, nucleus of the horizontal limb of the diagonal band, preoptic area, paraventricular thalamic nucleus, lateral globus pallidus, supraoptic nucleus, suprachiasmatic nucleus, subfornical organ, paraventricular nucleus of the hypothalamus, zona incerta, dorsomedial nucleus of the hypothalamus, ventromedial nucleus of the hypothalamus, arcuate nucleus of the hypothalamus, basomedial amygdaloid nucleus, medial amygdaloid nucleus, medial habenular, pyramidal cell layer of the hippocampus, granular layer of the dentate gyrus, posterior hypothalamus, supramammilliary nucleus, premammillary nucleus, nucleus of Darkschewitsch, Edinger-Westphal nucleus, ventral tegmental area, dorsal raphe nucleus, periaqueductal gray, median raphe nucleus, lateral parabrachial nucleus, dorsal tegmental nucleus, laterodorsal tegmental nucleus, locus coeruleus, Barrington's nucleus, medial vestibular nucleus, ambiguous nucleus, dorsal vagal complex and hypoglossal nucleus.

The protein localises to the endoplasmic reticulum membrane. The protein resides in the lipid droplet. In terms of biological role, plays a crucial role in the formation of lipid droplets (LDs) which are storage organelles at the center of lipid and energy homeostasis. In association with LDAF1, defines the sites of LD formation in the ER. Also required for growth and maturation of small nascent LDs into larger mature LDs. Mediates the formation and/or stabilization of endoplasmic reticulum-lipid droplets (ER-LD) contacts, facilitating protein and lipid delivery from the ER into growing LDs. Regulates the maturation of ZFYVE1-positive nascent LDs and the function of the RAB18-ZFYVE1 complex in mediating the formation of ER-LD contacts. Binds anionic phospholipids including phosphatidic acid. Plays an important role in the differentiation and development of adipocytes. This is Seipin from Mus musculus (Mouse).